The following is a 553-amino-acid chain: Solute carrier family 45 member 3 (553 aa).

11 consecutive transmembrane segments (helical) span residues 19 to 39 (LLVN…ITYV), 52 to 72 (FMTM…PLLG), 88 to 108 (FIWA…RAGW), 120 to 140 (LELA…QVCF), 161 to 181 (YSVY…LPAI), 198 to 218 (CLFG…LLVA), 275 to 295 (FVAE…YTDF), 323 to 343 (MGSL…LVMD), 353 to 373 (AVYL…CLSH), 382 to 402 (AALT…LASL), and 522 to 542 (AYMV…TQVV).

The protein belongs to the glycoside-pentoside-hexuronide (GPH) cation symporter transporter (TC 2.A.2) family. As to expression, prostate specific. Expressed in all prostatic glandular cells. Expressed both in normal and cancerous prostates.

It is found in the membrane. The catalysed reaction is sucrose(out) + H(+)(out) = sucrose(in) + H(+)(in). Functionally, proton-associated sucrose transporter. May be able to transport also glucose and fructose. The chain is Solute carrier family 45 member 3 from Homo sapiens (Human).